The sequence spans 343 residues: L-threonine 3-dehydrogenase (343 aa).

C38 lines the Zn(2+) pocket. Residues T40 and H43 each act as charge relay system in the active site. Zn(2+) contacts are provided by H63, E64, C93, C96, C99, and C107. NAD(+)-binding positions include I175, D195, R200, L262 to L264, and I286 to Y287.

Belongs to the zinc-containing alcohol dehydrogenase family. Homotetramer. Zn(2+) is required as a cofactor.

The protein resides in the cytoplasm. The catalysed reaction is L-threonine + NAD(+) = (2S)-2-amino-3-oxobutanoate + NADH + H(+). It participates in amino-acid degradation; L-threonine degradation via oxydo-reductase pathway; glycine from L-threonine: step 1/2. Its function is as follows. Catalyzes the NAD(+)-dependent oxidation of L-threonine to 2-amino-3-ketobutyrate. This is L-threonine 3-dehydrogenase from Saccharopolyspora erythraea (strain ATCC 11635 / DSM 40517 / JCM 4748 / NBRC 13426 / NCIMB 8594 / NRRL 2338).